A 246-amino-acid polypeptide reads, in one-letter code: Trypsin V-B (246 aa).

The first 15 residues, Met1–Ala15, serve as a signal peptide directing secretion. Positions Phe16–Arg24 are cleaved as a propeptide — activation peptide. Positions Ile25–Ala244 constitute a Peptidase S1 domain. 6 disulfide bridges follow: Cys31–Cys160, Cys49–Cys65, Cys133–Cys233, Cys140–Cys206, Cys171–Cys185, and Cys196–Cys220. His64 functions as the Charge relay system in the catalytic mechanism. Glu76, Asn78, and Glu86 together coordinate Ca(2+). The active-site Charge relay system is the Asp108. The active-site Charge relay system is Ser200.

It belongs to the peptidase S1 family. Requires Ca(2+) as cofactor.

Its subcellular location is the secreted. It is found in the extracellular space. It catalyses the reaction Preferential cleavage: Arg-|-Xaa, Lys-|-Xaa.. The polypeptide is Trypsin V-B (Rattus norvegicus (Rat)).